A 116-amino-acid chain; its full sequence is Large ribosomal subunit protein uL18 (116 aa).

The protein belongs to the universal ribosomal protein uL18 family. Part of the 50S ribosomal subunit; part of the 5S rRNA/L5/L18/L25 subcomplex. Contacts the 5S and 23S rRNAs.

Functionally, this is one of the proteins that bind and probably mediate the attachment of the 5S RNA into the large ribosomal subunit, where it forms part of the central protuberance. The polypeptide is Large ribosomal subunit protein uL18 (Teredinibacter turnerae (strain ATCC 39867 / T7901)).